The primary structure comprises 135 residues: Large ribosomal subunit protein bL19 (135 aa).

It belongs to the bacterial ribosomal protein bL19 family.

This protein is located at the 30S-50S ribosomal subunit interface and may play a role in the structure and function of the aminoacyl-tRNA binding site. The protein is Large ribosomal subunit protein bL19 of Xanthomonas euvesicatoria pv. vesicatoria (strain 85-10) (Xanthomonas campestris pv. vesicatoria).